We begin with the raw amino-acid sequence, 141 residues long: Large-conductance mechanosensitive channel (141 aa).

Helical transmembrane passes span 17 to 37 (MDLA…ASIV), 40 to 60 (LIMP…LFIA), and 86 to 106 (GNFV…FIIV).

Belongs to the MscL family. In terms of assembly, homopentamer.

It is found in the cell inner membrane. In terms of biological role, channel that opens in response to stretch forces in the membrane lipid bilayer. May participate in the regulation of osmotic pressure changes within the cell. This Thiobacillus denitrificans (strain ATCC 25259 / T1) protein is Large-conductance mechanosensitive channel.